Reading from the N-terminus, the 53-residue chain is Mitochondrial sheath formation-associated protein (53 aa).

2 consecutive stretches face the mitochondrial intermembrane side: residues 1–6 (MIVLGW) and 1–7 (MIVLGWM). The next 2 helical transmembrane spans lie at 7–23 (MLFV…PEAM) and 8–24 (LFVG…EAMP). Cytoplasmic loops occupy residues 24–53 (PPTL…ELLL) and 25–40 (PTLK…ENKA).

In terms of assembly, interacts with VDAC3. As to expression, testis specific. Detected only in germ cells at the step of spermiogenesis (at protein level). Expressed during the middle steps of spermatid development. In terms of tissue distribution, testis specific. Detected only in germ cells at the step of spermiogenesis (at protein level). Expressed in the late steps of spermatid development.

The protein resides in the mitochondrion outer membrane. Regulates sperm development. May be involved in mitochondrial sheath formation. This chain is Mitochondrial sheath formation-associated protein, found in Mus musculus (Mouse).